A 274-amino-acid polypeptide reads, in one-letter code: Dermonecrotic toxin SaSicTox-betaIIB1 (274 aa).

The active site involves His5. Residues Glu25 and Asp27 each coordinate Mg(2+). Catalysis depends on His41, which acts as the Nucleophile. 2 disulfide bridges follow: Cys45/Cys51 and Cys47/Cys190. Residue Asp85 participates in Mg(2+) binding.

It belongs to the arthropod phospholipase D family. Class II subfamily. Requires Mg(2+) as cofactor. In terms of tissue distribution, expressed by the venom gland.

The protein localises to the secreted. The catalysed reaction is an N-(acyl)-sphingosylphosphocholine = an N-(acyl)-sphingosyl-1,3-cyclic phosphate + choline. It catalyses the reaction an N-(acyl)-sphingosylphosphoethanolamine = an N-(acyl)-sphingosyl-1,3-cyclic phosphate + ethanolamine. The enzyme catalyses a 1-acyl-sn-glycero-3-phosphocholine = a 1-acyl-sn-glycero-2,3-cyclic phosphate + choline. It carries out the reaction a 1-acyl-sn-glycero-3-phosphoethanolamine = a 1-acyl-sn-glycero-2,3-cyclic phosphate + ethanolamine. Functionally, dermonecrotic toxins cleave the phosphodiester linkage between the phosphate and headgroup of certain phospholipids (sphingolipid and lysolipid substrates), forming an alcohol (often choline) and a cyclic phosphate. This toxin acts on sphingomyelin (SM). It may also act on ceramide phosphoethanolamine (CPE), lysophosphatidylcholine (LPC) and lysophosphatidylethanolamine (LPE), but not on lysophosphatidylserine (LPS), and lysophosphatidylglycerol (LPG). It acts by transphosphatidylation, releasing exclusively cyclic phosphate products as second products. Induces dermonecrosis, hemolysis, increased vascular permeability, edema, inflammatory response, and platelet aggregation. The protein is Dermonecrotic toxin SaSicTox-betaIIB1 of Sicarius albospinosus (Six-eyed crab spider).